The primary structure comprises 878 residues: Lon protease 2 (878 aa).

The Lon N-terminal domain maps to Leu85–Ile281. Residue Gly434–Thr441 participates in ATP binding. Residues Asn668 to Ile850 enclose the Lon proteolytic domain. Active-site residues include Ser756 and Lys799.

It belongs to the peptidase S16 family. In terms of assembly, homohexamer. Organized in a ring with a central cavity.

Its subcellular location is the cytoplasm. The catalysed reaction is Hydrolysis of proteins in presence of ATP.. ATP-dependent serine protease that mediates the selective degradation of mutant and abnormal proteins as well as certain short-lived regulatory proteins. Required for cellular homeostasis and for survival from DNA damage and developmental changes induced by stress. Degrades polypeptides processively to yield small peptide fragments that are 5 to 10 amino acids long. Binds to DNA in a double-stranded, site-specific manner. This chain is Lon protease 2, found in Hydrogenovibrio crunogenus (strain DSM 25203 / XCL-2) (Thiomicrospira crunogena).